The chain runs to 501 residues: Archaemetzincin-1 (501 aa).

His-261 serves as a coordination point for Zn(2+). The active-site Proton acceptor is Glu-262. Positions 265, 272, 277, 296, and 299 each coordinate Zn(2+). Residues 349–370 (DSGMGCESDTEPVTSPSEPVTP) are disordered.

This sequence belongs to the peptidase M54 family. The cofactor is Zn(2+).

Probable zinc metalloprotease. In Rattus norvegicus (Rat), this protein is Archaemetzincin-1 (Amz1).